The following is a 276-amino-acid chain: 4-chlorobenzoyl coenzyme A dehalogenase-2 (276 aa).

Position 66–71 (66–71 (AGFDLE)) interacts with substrate. Residue His-93 is the Proton acceptor of the active site. Gly-117 provides a ligand contact to substrate. The Nucleophile role is filled by Asp-148. Arg-261 lines the substrate pocket.

It belongs to the enoyl-CoA hydratase/isomerase family. As to quaternary structure, homotetramer.

It catalyses the reaction 4-chlorobenzoyl-CoA + H2O = 4-hydroxybenzoyl-CoA + chloride + H(+). It functions in the pathway xenobiotic degradation; 4-chlorobenzoate degradation; 4-hydroxybenzoate from 4-chlorobenzoate: step 2/3. Dehalogenates 4-chlorobenzoyl-CoA, 4-iodobenzoyl-CoA, 4-bromobenzoyl-CoA and, at a slower rate, 4-fluorobenzoyl-CoA. Does not dehalogenate 2-chlorobenzoyl-CoA or 3-chlorobenzoyl-CoA. The sequence is that of 4-chlorobenzoyl coenzyme A dehalogenase-2 from Arthrobacter sp.